Here is a 673-residue protein sequence, read N- to C-terminus: Paralemmin-3 (673 aa).

Coiled coils occupy residues 4 to 49 (SSLY…LRER) and 75 to 101 (GQAQARIRNLEDSLFTLQSQLQLLQSA). 2 disordered regions span residues 49-78 (RWLMDGAAAVPEPSEDPTSKDPQSPEGQAQ) and 99-213 (QSAS…GEAK). Over residues 123–137 (LSQSIVEAGSVGQTD) the composition is skewed to polar residues. Phosphoserine is present on residues serine 124 and serine 143. Phosphothreonine is present on threonine 151. Serine 155, serine 157, and serine 260 each carry phosphoserine. 2 disordered regions span residues 295 to 343 (VPEV…SFIW) and 356 to 673 (LLVE…CAVM). Threonine 301 is modified (phosphothreonine). The residue at position 325 (serine 325) is a Phosphoserine. Residues 327 to 338 (EGDGQGGSGGEE) are compositionally biased toward gly residues. Phosphoserine occurs at positions 375 and 420. Composition is skewed to basic and acidic residues over residues 392–477 (EAEK…KRGA) and 487–532 (GVEK…EKTQ). Phosphoserine occurs at positions 544 and 660. S-palmitoyl cysteine attachment occurs at residues cysteine 667 and cysteine 669. Position 670 is a cysteine methyl ester (cysteine 670). Residue cysteine 670 is the site of S-farnesyl cysteine attachment. The propeptide at 671 to 673 (AVM) is removed in mature form.

This sequence belongs to the paralemmin family. In terms of assembly, interacts with SIGIRR. In terms of processing, palmitoylated on Cys-667 and Cys-669 and prenylated on Cys-670; which is required for membrane association.

It localises to the cytoplasm. It is found in the cell membrane. In terms of biological role, ATP-binding protein, which may act as a adapter in the Toll-like receptor (TLR) signaling. The sequence is that of Paralemmin-3 (PALM3) from Homo sapiens (Human).